We begin with the raw amino-acid sequence, 74 residues long: Defensin J1-2 (74 aa).

The N-terminal stretch at 1-27 (MAGFSKVIATIFLMMMLVFATGMVAEA) is a signal peptide. 4 disulfides stabilise this stretch: Cys-30–Cys-74, Cys-41–Cys-61, Cys-47–Cys-68, and Cys-51–Cys-70.

It belongs to the DEFL family. Monomer. As to expression, expressed in flowers and in young fruits.

It localises to the secreted. In terms of biological role, plant defense peptide with antifungal activity against F.oxysporum and B.cinerea. The polypeptide is Defensin J1-2 (Capsicum annuum (Capsicum pepper)).